Reading from the N-terminus, the 501-residue chain is Aldehyde dehydrogenase family 2 member C4 (501 aa).

NAD(+) is bound at residue 245 to 250 (GSTDVG). E268 (proton acceptor) is an active-site residue. The active-site Nucleophile is C302.

Belongs to the aldehyde dehydrogenase family. As to quaternary structure, homotetramer.

It is found in the cytoplasm. The protein localises to the cytosol. It catalyses the reaction an aldehyde + NAD(+) + H2O = a carboxylate + NADH + 2 H(+). Its function is as follows. Involved in ferulic acid and sinapic acid biosynthesis by oxidation of conyferylaldehyde and sinapaldehyde, respectively. Can oxidize L-lactaldehyde. Possesses activity on acetaldehyde and glycolaldehyde in vitro. The protein is Aldehyde dehydrogenase family 2 member C4 (ALDH2C4) of Arabidopsis thaliana (Mouse-ear cress).